Consider the following 256-residue polypeptide: Undecaprenyl-diphosphatase (256 aa).

A run of 7 helical transmembrane segments spans residues 1–21 (MDIFHAIILGIVEGLTEFLPV), 41–61 (FHKTFEISIQLGSILAVLALF), 69–89 (VDIWLKLAVAFIPTGALGFLL), 96–116 (LFAPSTVAYALILGGIVFLVL), 172–192 (VAAEFSFLLALPTMFIATGYD), 207–227 (ALGVGFVVAFIFAMIAVKGFL), and 233–253 (FNFVPFGIYRIILGIIFLFYL).

This sequence belongs to the UppP family.

The protein localises to the cell inner membrane. The catalysed reaction is di-trans,octa-cis-undecaprenyl diphosphate + H2O = di-trans,octa-cis-undecaprenyl phosphate + phosphate + H(+). In terms of biological role, catalyzes the dephosphorylation of undecaprenyl diphosphate (UPP). Confers resistance to bacitracin. The polypeptide is Undecaprenyl-diphosphatase (Wolinella succinogenes (strain ATCC 29543 / DSM 1740 / CCUG 13145 / JCM 31913 / LMG 7466 / NCTC 11488 / FDC 602W) (Vibrio succinogenes)).